The primary structure comprises 150 residues: MQIILLDKVLNVGGLGDIVKVKDGYARNFLIPTGRARRATAANKAEFEAKRVELEKAAAAKLAESQAQGEKLGGTTVKLTQKAGVDGRLFGSVTNGDIAEELGKQGYKVAKSQVRLPNGPIKVVGDSTVSVALHTDVVVDITVTVYGETA.

Belongs to the bacterial ribosomal protein bL9 family.

In terms of biological role, binds to the 23S rRNA. This chain is Large ribosomal subunit protein bL9, found in Variovorax paradoxus (strain S110).